We begin with the raw amino-acid sequence, 478 residues long: Glycogen synthase (478 aa).

Position 15 (Lys15) interacts with ADP-alpha-D-glucose.

It belongs to the glycosyltransferase 1 family. Bacterial/plant glycogen synthase subfamily.

It carries out the reaction [(1-&gt;4)-alpha-D-glucosyl](n) + ADP-alpha-D-glucose = [(1-&gt;4)-alpha-D-glucosyl](n+1) + ADP + H(+). Its pathway is glycan biosynthesis; glycogen biosynthesis. Functionally, synthesizes alpha-1,4-glucan chains using ADP-glucose. In Enterobacter sp. (strain 638), this protein is Glycogen synthase.